Here is a 610-residue protein sequence, read N- to C-terminus: Synaptotagmin-like protein 3 (610 aa).

The region spanning 4–123 (EIDLSALKEL…IKTGEWFYEE (120 aa)) is the RabBD domain. The disordered stretch occupies residues 219-239 (RQCVGQTERRSQSDTAVNVTT). C2 domains are found at residues 306 to 428 (VTGE…TQSF) and 462 to 603 (RPRK…NLWT).

As to quaternary structure, monomer. Binds NRXN1. Binds RAB27A that has been activated by GTP-binding via its N-terminus.

It is found in the endomembrane system. May act as Rab effector protein and play a role in vesicle trafficking. Binds phospholipids in the presence of calcium ions. In Homo sapiens (Human), this protein is Synaptotagmin-like protein 3 (SYTL3).